Reading from the N-terminus, the 101-residue chain is Iron-sulfur cluster assembly protein CyaY (101 aa).

It belongs to the frataxin family.

In terms of biological role, involved in iron-sulfur (Fe-S) cluster assembly. May act as a regulator of Fe-S biogenesis. The chain is Iron-sulfur cluster assembly protein CyaY from Haemophilus influenzae (strain 86-028NP).